Reading from the N-terminus, the 233-residue chain is Charged multivesicular body protein 4c (233 aa).

Disordered stretches follow at residues 1 to 24 (MSKLGKFFKGGGSSKSRAAPSPQE) and 173 to 233 (QEEL…AWAT). Residues 1-153 (MSKLGKFFKG…EISEAFSQRV (153 aa)) form an intramolecular interaction with C-terminus region. Residues 125-183 (LNKIDDLMQEITEQQDIAQEISEAFSQRVGFGDDFDEDELMAELEELEQEELNKKMTNI) adopt a coiled-coil conformation. An intramolecular interaction with N-terminus region spans residues 154-233 (GFGDDFDEDE…DIKQLAAWAT (80 aa)). The segment covering 204–216 (SSTARRSRAASSQ) has biased composition (low complexity). The residue at position 210 (Ser210) is a Phosphoserine; by AURKB.

This sequence belongs to the SNF7 family. As to quaternary structure, probable core component of the endosomal sorting required for transport complex III (ESCRT-III). ESCRT-III components are thought to multimerize to form a flat lattice on the perimeter membrane of the endosome. Several assembly forms of ESCRT-III may exist that interact and act sequentially. Self-associates. Interacts with CHMP2A. Interacts with CHMP4A. Interacts with CHMP4B. Interacts with CHMP6. Interacts with VPS4A. Interacts with PDCD6IP; the interaction is direct. Phosphorylated at Ser-210 by AURKB during cytokinesis: together with ZFYVE19/ANCHR, phosphorylated CHMP4C retains abscission-competent VPS4 (VPS4A and/or VPS4B) at the midbody ring until abscission checkpoint signaling is terminated at late cytokinesis. As to expression, expressed in heart, spleen and kidney.

The protein localises to the cytoplasm. It localises to the cytosol. The protein resides in the late endosome membrane. Its subcellular location is the midbody. It is found in the midbody ring. Probable core component of the endosomal sorting required for transport complex III (ESCRT-III) which is involved in multivesicular bodies (MVBs) formation and sorting of endosomal cargo proteins into MVBs. MVBs contain intraluminal vesicles (ILVs) that are generated by invagination and scission from the limiting membrane of the endosome and mostly are delivered to lysosomes enabling degradation of membrane proteins, such as stimulated growth factor receptors, lysosomal enzymes and lipids. The MVB pathway appears to require the sequential function of ESCRT-O, -I,-II and -III complexes. ESCRT-III proteins mostly dissociate from the invaginating membrane before the ILV is released. The ESCRT machinery also functions in topologically equivalent membrane fission events, such as the terminal stages of cytokinesis and the budding of enveloped viruses (HIV-1 and other lentiviruses). Key component of the cytokinesis checkpoint, a process required to delay abscission to prevent both premature resolution of intercellular chromosome bridges and accumulation of DNA damage: upon phosphorylation by AURKB, together with ZFYVE19/ANCHR, retains abscission-competent VPS4 (VPS4A and/or VPS4B) at the midbody ring until abscission checkpoint signaling is terminated at late cytokinesis. Deactivation of AURKB results in dephosphorylation of CHMP4C followed by its dissociation from ANCHR and VPS4 and subsequent abscission. ESCRT-III proteins are believed to mediate the necessary vesicle extrusion and/or membrane fission activities, possibly in conjunction with the AAA ATPase VPS4. Involved in HIV-1 p6- and p9-dependent virus release. CHMP4A/B/C are required for the exosomal release of SDCBP, CD63 and syndecan. The polypeptide is Charged multivesicular body protein 4c (CHMP4C) (Homo sapiens (Human)).